Here is a 250-residue protein sequence, read N- to C-terminus: Flavin-dependent thymidylate synthase (250 aa).

In terms of domain architecture, ThyX spans 7 to 233 (LRVQLIAKTD…PAVFADFEIA (227 aa)). FAD contacts are provided by residues Ser-71, 95 to 97 (RHR), and Gln-103. DUMP contacts are provided by residues 92–95 (ELIR), 103–107 (QLSQR), and Arg-172. Positions 95–105 (RHRHFSYSQLS) match the ThyX motif motif. FAD-binding positions include 188–190 (NYR) and His-194. Arg-199 provides a ligand contact to dUMP. The active-site Involved in ionization of N3 of dUMP, leading to its activation is the Arg-199.

This sequence belongs to the thymidylate synthase ThyX family. Homotetramer. FAD serves as cofactor.

The enzyme catalyses dUMP + (6R)-5,10-methylene-5,6,7,8-tetrahydrofolate + NADPH + H(+) = dTMP + (6S)-5,6,7,8-tetrahydrofolate + NADP(+). Its pathway is pyrimidine metabolism; dTTP biosynthesis. Catalyzes the reductive methylation of 2'-deoxyuridine-5'-monophosphate (dUMP) to 2'-deoxythymidine-5'-monophosphate (dTMP) while utilizing 5,10-methylenetetrahydrofolate (mTHF) as the methyl donor, and NADPH and FADH(2) as the reductant. The protein is Flavin-dependent thymidylate synthase of Mycobacterium avium (strain 104).